The following is a 60-amino-acid chain: MFAGLPSLTHEQQQQAVERIQELMSQGMSSGEAIAQVAQEIRATHQGDRIVARFEDDEEE.

This sequence belongs to the UPF0181 family.

The sequence is that of UPF0181 protein ESA_01442 from Cronobacter sakazakii (strain ATCC BAA-894) (Enterobacter sakazakii).